Consider the following 345-residue polypeptide: G-protein coupled receptor str-33 (345 aa).

Over 1-11 (MTVNLRDLSRT) the chain is Extracellular. The helical transmembrane segment at 12 to 32 (IAEFAFLTALVCNSLLIYLTA) threads the bilayer. Residues 33–37 (RRTKN) lie on the Cytoplasmic side of the membrane. A helical transmembrane segment spans residues 38-58 (ITGAYKYMIILFALLGLIFSC). The Extracellular segment spans residues 59–92 (TEMLARPFVHNFNASFVYFSLSNDLSEFKSLVQM). A glycan (N-linked (GlcNAc...) asparagine) is linked at N71. A helical membrane pass occupies residues 93-113 (LLVLYSGLYSSLISFVAVQFI). Topologically, residues 114-133 (YRYMVLVNANLLESWFTGWK) are cytoplasmic. A helical transmembrane segment spans residues 134–154 (LVFWVFYVIFFGFAWSASVYF). Over 155–204 (CLFPDTYSYNYIRTEFKDVYNIGVDRVAIFILVAYEKHPSSEEYKLRPAS) the chain is Extracellular. Residues 205–225 (VIMIAGTISILVIQYSIMLFC) form a helical membrane-spanning segment. The Cytoplasmic segment spans residues 226 to 258 (GASMHRQMNEKLKNFSPDNQRLQKQFFKTLLLQ). Residues 259 to 279 (ISVPTVLFHMPIFPVLLGPFF) form a helical membrane-spanning segment. The Extracellular portion of the chain corresponds to 280-288 (NFEISAESG). Residues 289–309 (IIYSLFSLYPPIDGLIIMTVV) traverse the membrane as a helical segment. Over 310–345 (TDYRIALTELFLGSHSGAQVEVIPVEVVSILNFSLL) the chain is Cytoplasmic.

It belongs to the nematode receptor-like protein str family. In terms of tissue distribution, detected in ALM and PLM mechanosensory neurons and head neurons.

The protein resides in the cell membrane. In terms of biological role, regulates egg-laying and locomotion. Likely to act upstream of goa-1 to suppress 5-hydroxytryptamine (5-HT) biosynthesis in hermaphrodite-specific neurons (HSNs) through inhibition of tph-1 transcription. This chain is G-protein coupled receptor str-33, found in Caenorhabditis elegans.